We begin with the raw amino-acid sequence, 422 residues long: Ubiquitin-conjugating enzyme E2 Q1 (422 aa).

The residue at position 1 (methionine 1) is an N-acetylmethionine. Over residues 1–24 (MQQPQPQGQQQPGPGQQLGVQGAA) the composition is skewed to low complexity. Disordered regions lie at residues 1–40 (MQQPQPQGQQQPGPGQQLGVQGAAPGAGGGPGGGPGPGPC) and 173–221 (QPLP…EDDG). A compositionally biased stretch (gly residues) spans 25 to 35 (PGAGGGPGGGP). A compositionally biased stretch (acidic residues) spans 185 to 200 (VSSEDEDEEMPEDTED). Basic and acidic residues predominate over residues 212–221 (AEGKKSEDDG). A UBC core domain is found at 251–415 (QATDRLMKEL…VQIHEKNGWY (165 aa)). Cysteine 351 functions as the Glycyl thioester intermediate in the catalytic mechanism.

This sequence belongs to the ubiquitin-conjugating enzyme family. Monomer and homodimer. Only the homodimer is linked to ubiquitin through thiolester activation. Interacts (via N-terminus) with B4GALT1 (via N-terminal cytoplasmic domain); the interaction is direct. Post-translationally, autoubiquitinated in vitro in the presence of NEDD4L. Expressed in liver, brain, heart, spleen, lung, kidney, muscle, ovary, epididymis, testis and placenta. Also expressed in thymus and ES cells. Only expressed in the uterus during pregnancy. Expressed in oocytes and during subsequent embryonic development stages (4-cell stage, blastocyst, 8.5 dpc, 13.5 dpc, 16.5 dpc and 18.5 dpc).

Its subcellular location is the nucleus. It localises to the cell projection. The protein localises to the filopodium. It is found in the cytoplasm. The protein resides in the cytosol. The enzyme catalyses S-ubiquitinyl-[E1 ubiquitin-activating enzyme]-L-cysteine + [E2 ubiquitin-conjugating enzyme]-L-cysteine = [E1 ubiquitin-activating enzyme]-L-cysteine + S-ubiquitinyl-[E2 ubiquitin-conjugating enzyme]-L-cysteine.. Its pathway is protein modification; protein ubiquitination. Its function is as follows. Catalyzes the covalent attachment of ubiquitin to other proteins. Involved in female fertility and embryo implantation. May be involved in hormonal homeostasis in females. Involved in regulation of B4GALT1 cell surface expression, B4GALT1-mediated cell adhesion to laminin and embryoid body formation. The protein is Ubiquitin-conjugating enzyme E2 Q1 (Ube2q1) of Mus musculus (Mouse).